A 281-amino-acid polypeptide reads, in one-letter code: 40S small subunit processome assembly factor 1 (281 aa).

The tract at residues 29 to 141 is disordered; sequence LGETEGETEQ…DEDEPAKNKT (113 aa). Phosphoserine is present on residues Ser-67 and Ser-75. Residue Lys-172 is modified to N6-acetyllysine. The tract at residues 221–254 is disordered; that stretch reads ETDIFKKKKKKGRGQEDRRSKKSAPSILSSGQVG. A Phosphoserine modification is found at Ser-267.

Part of the small subunit (SSU) processome, composed of more than 70 proteins and the RNA chaperone small nucleolar RNA (snoRNA) U3.

The protein localises to the chromosome. It localises to the nucleus. Its subcellular location is the nucleolus. In terms of biological role, part of the small subunit (SSU) processome, first precursor of the small eukaryotic ribosomal subunit. During the assembly of the SSU processome in the nucleolus, many ribosome biogenesis factors, an RNA chaperone and ribosomal proteins associate with the nascent pre-rRNA and work in concert to generate RNA folding, modifications, rearrangements and cleavage as well as targeted degradation of pre-ribosomal RNA by the RNA exosome. Prevents helicase DHX37 to be recruited before post-A1 state. This Mus musculus (Mouse) protein is 40S small subunit processome assembly factor 1.